The following is a 475-amino-acid chain: Ribulose bisphosphate carboxylase large chain (475 aa).

The propeptide occupies 1–2 (MS). N-acetylproline is present on Pro3. N6,N6,N6-trimethyllysine is present on Lys14. Substrate contacts are provided by Asn123 and Thr173. The active-site Proton acceptor is the Lys175. Substrate is bound at residue Lys177. Positions 201, 203, and 204 each coordinate Mg(2+). Lys201 carries the N6-carboxylysine modification. Residue His294 is the Proton acceptor of the active site. 3 residues coordinate substrate: Arg295, His327, and Ser379.

Belongs to the RuBisCO large chain family. Type I subfamily. As to quaternary structure, heterohexadecamer of 8 large chains and 8 small chains; disulfide-linked. The disulfide link is formed within the large subunit homodimers. It depends on Mg(2+) as a cofactor. In terms of processing, the disulfide bond which can form in the large chain dimeric partners within the hexadecamer appears to be associated with oxidative stress and protein turnover.

The protein localises to the plastid. It localises to the chloroplast. The enzyme catalyses 2 (2R)-3-phosphoglycerate + 2 H(+) = D-ribulose 1,5-bisphosphate + CO2 + H2O. It carries out the reaction D-ribulose 1,5-bisphosphate + O2 = 2-phosphoglycolate + (2R)-3-phosphoglycerate + 2 H(+). Functionally, ruBisCO catalyzes two reactions: the carboxylation of D-ribulose 1,5-bisphosphate, the primary event in carbon dioxide fixation, as well as the oxidative fragmentation of the pentose substrate in the photorespiration process. Both reactions occur simultaneously and in competition at the same active site. The polypeptide is Ribulose bisphosphate carboxylase large chain (Carpinus caroliniana (American hornbeam)).